Reading from the N-terminus, the 59-residue chain is Large ribosomal subunit protein bL32 (59 aa).

Positions 1–21 are disordered; that stretch reads MAVPKKKSSKSKGRSRAAHHA.

This sequence belongs to the bacterial ribosomal protein bL32 family.

The chain is Large ribosomal subunit protein bL32 from Magnetococcus marinus (strain ATCC BAA-1437 / JCM 17883 / MC-1).